A 542-amino-acid polypeptide reads, in one-letter code: Prolyl 3-hydroxylase OGFOD1 (542 aa).

The Fe2OG dioxygenase domain maps to Asp134 to Gly239. Residues His155 and Asp157 each contribute to the Fe cation site. 2-oxoglutarate is bound at residue Tyr169. Residue His218 coordinates Fe cation. Arg230 is a 2-oxoglutarate binding site. Residues Ser371–Cys435 are disordered. Polar residues predominate over residues Ser395–Gly417.

This sequence belongs to the TPA1 family. In terms of assembly, monomer. The cofactor is Fe(2+). It depends on L-ascorbate as a cofactor.

The protein resides in the cytoplasm. Its subcellular location is the nucleus. It carries out the reaction [ribosomal protein uS12]-L-proline + 2-oxoglutarate + O2 = [ribosomal protein uS12]-(3S)-3-hydroxy-L-proline + succinate + CO2. Prolyl 3-hydroxylase that catalyzes 3-hydroxylation of 'Pro-62' of small ribosomal subunit uS12 (RPS23), thereby regulating protein translation termination efficiency. Involved in stress granule formation. The protein is Prolyl 3-hydroxylase OGFOD1 (OGFOD1) of Bos taurus (Bovine).